The following is a 102-amino-acid chain: MATKKIRIRLKAYEHRILDAAAEKIVETAKRTNAEVSGPIPLPTDRSVYTVIRATHKYKDSREQFEMRTHKRLIDIIEPTQKTVDSLMKLDLPSGVNIEIKL.

It belongs to the universal ribosomal protein uS10 family. Part of the 30S ribosomal subunit.

Involved in the binding of tRNA to the ribosomes. The chain is Small ribosomal subunit protein uS10 from Lactococcus lactis subsp. lactis (strain IL1403) (Streptococcus lactis).